A 358-amino-acid chain; its full sequence is Phosphoserine aminotransferase (358 aa).

Arg41 is an L-glutamate binding site. Residues 75 to 76 (AS), Trp100, Thr148, Asp167, and Gln190 contribute to the pyridoxal 5'-phosphate site. Lys191 is modified (N6-(pyridoxal phosphate)lysine). 233 to 234 (NT) lines the pyridoxal 5'-phosphate pocket.

The protein belongs to the class-V pyridoxal-phosphate-dependent aminotransferase family. SerC subfamily. In terms of assembly, homodimer. Pyridoxal 5'-phosphate is required as a cofactor.

It is found in the cytoplasm. The catalysed reaction is O-phospho-L-serine + 2-oxoglutarate = 3-phosphooxypyruvate + L-glutamate. The enzyme catalyses 4-(phosphooxy)-L-threonine + 2-oxoglutarate = (R)-3-hydroxy-2-oxo-4-phosphooxybutanoate + L-glutamate. Its pathway is amino-acid biosynthesis; L-serine biosynthesis; L-serine from 3-phospho-D-glycerate: step 2/3. The protein operates within cofactor biosynthesis; pyridoxine 5'-phosphate biosynthesis; pyridoxine 5'-phosphate from D-erythrose 4-phosphate: step 3/5. In terms of biological role, catalyzes the reversible conversion of 3-phosphohydroxypyruvate to phosphoserine and of 3-hydroxy-2-oxo-4-phosphonooxybutanoate to phosphohydroxythreonine. The chain is Phosphoserine aminotransferase from Campylobacter jejuni subsp. doylei (strain ATCC BAA-1458 / RM4099 / 269.97).